The primary structure comprises 203 residues: Holliday junction branch migration complex subunit RuvA (203 aa).

Residues 1 to 63 (MIDYLRGTLT…EDVIRLYGFR (63 aa)) are domain I. The domain II stretch occupies residues 64 to 142 (TKEKRSLFEK…ELHPGLFSQK (79 aa)). Residues 143 to 152 (EEQPKPHEKN) form a flexible linker region. A domain III region spans residues 153–203 (DGNQALDEAMEALKALGYVEKELKKVKPKLEQETLTTDAYIKKALQLMLNR).

Belongs to the RuvA family. In terms of assembly, homotetramer. Forms an RuvA(8)-RuvB(12)-Holliday junction (HJ) complex. HJ DNA is sandwiched between 2 RuvA tetramers; dsDNA enters through RuvA and exits via RuvB. An RuvB hexamer assembles on each DNA strand where it exits the tetramer. Each RuvB hexamer is contacted by two RuvA subunits (via domain III) on 2 adjacent RuvB subunits; this complex drives branch migration. In the full resolvosome a probable DNA-RuvA(4)-RuvB(12)-RuvC(2) complex forms which resolves the HJ.

It localises to the cytoplasm. In terms of biological role, the RuvA-RuvB-RuvC complex processes Holliday junction (HJ) DNA during genetic recombination and DNA repair, while the RuvA-RuvB complex plays an important role in the rescue of blocked DNA replication forks via replication fork reversal (RFR). RuvA specifically binds to HJ cruciform DNA, conferring on it an open structure. The RuvB hexamer acts as an ATP-dependent pump, pulling dsDNA into and through the RuvAB complex. HJ branch migration allows RuvC to scan DNA until it finds its consensus sequence, where it cleaves and resolves the cruciform DNA. The chain is Holliday junction branch migration complex subunit RuvA from Halalkalibacterium halodurans (strain ATCC BAA-125 / DSM 18197 / FERM 7344 / JCM 9153 / C-125) (Bacillus halodurans).